Reading from the N-terminus, the 273-residue chain is NADPH-dependent 7-cyano-7-deazaguanine reductase (273 aa).

81–83 (VES) is a substrate binding site. Position 83 to 84 (83 to 84 (SK)) interacts with NADPH. The active-site Thioimide intermediate is the Cys-179. The active-site Proton donor is the Asp-186. Residue 218–219 (AE) coordinates substrate. 247-248 (RG) is an NADPH binding site.

Belongs to the GTP cyclohydrolase I family. QueF type 2 subfamily. In terms of assembly, homodimer.

It is found in the cytoplasm. The enzyme catalyses 7-aminomethyl-7-carbaguanine + 2 NADP(+) = 7-cyano-7-deazaguanine + 2 NADPH + 3 H(+). It participates in tRNA modification; tRNA-queuosine biosynthesis. Functionally, catalyzes the NADPH-dependent reduction of 7-cyano-7-deazaguanine (preQ0) to 7-aminomethyl-7-deazaguanine (preQ1). In Rickettsia massiliae (strain Mtu5), this protein is NADPH-dependent 7-cyano-7-deazaguanine reductase.